We begin with the raw amino-acid sequence, 138 residues long: Large-conductance mechanosensitive channel (138 aa).

Helical transmembrane passes span 10-30 (FAMR…AAFG) and 76-96 (GSFI…FLAI).

This sequence belongs to the MscL family. Homopentamer.

The protein resides in the cell inner membrane. In terms of biological role, channel that opens in response to stretch forces in the membrane lipid bilayer. May participate in the regulation of osmotic pressure changes within the cell. This is Large-conductance mechanosensitive channel from Serratia proteamaculans (strain 568).